A 422-amino-acid polypeptide reads, in one-letter code: MPNNESTQTTVDEILNVDEDNDEDESNIFEKPWLLEIDNVPDANRIVGRDDHITFLAKNLRKMRTNSVPDNVLEWGETGTGKTLVARHVCERLEAATEGTDSPIVTAYINPDPISTYTSTFRKIAEQVNAKAENPLEVPYQGLSAEHYRDQKLWPVVQREFSGGLVVIIDEIDKHGEVNEVLYTLSRTQSKDDVDFPVITIGISNDIEFKGEIESRVQSTLQPEHRTFTPYEEDQLIAILENRRDAFYDGVLDDEVIPTTAELAAEEHGDARRAVRLFRNAGEIADEEGDDIVTAEHVHEADELVEVELFMEMVKGTPLSGKLLLFALTRLDRNNPEKEWFRTSEIHEVYQTVARDVKVEPKGYNRALELLNKHVTTGVLESKKKEGGDQGKFRSYSLQGDVESTRTGLINSTPELQTLMGW.

ATP contacts are provided by residues 80–84 (TGKTL), Tyr-231, and Arg-243.

Belongs to the CDC6/cdc18 family.

Involved in regulation of DNA replication. This is ORC1-type DNA replication protein 13 (cdc6m) from Haloarcula marismortui (strain ATCC 43049 / DSM 3752 / JCM 8966 / VKM B-1809) (Halobacterium marismortui).